We begin with the raw amino-acid sequence, 455 residues long: Bifunctional protein GlmU (455 aa).

The tract at residues 1 to 228 (MTQPLHVIIL…AQEAEGANDP (228 aa)) is pyrophosphorylase. UDP-N-acetyl-alpha-D-glucosamine is bound by residues 10–13 (LAAG), lysine 24, glutamine 76, 81–82 (GT), 103–105 (YGD), glycine 138, glutamate 153, asparagine 168, and asparagine 226. Aspartate 105 contacts Mg(2+). Asparagine 226 serves as a coordination point for Mg(2+). Positions 229-249 (WQLSQLERAWQRRAVRALCAQ) are linker. The interval 250–455 (GARVRDPARL…DGWKRPLKKS (206 aa)) is N-acetyltransferase. 2 residues coordinate UDP-N-acetyl-alpha-D-glucosamine: arginine 332 and lysine 350. Histidine 362 acts as the Proton acceptor in catalysis. UDP-N-acetyl-alpha-D-glucosamine is bound by residues tyrosine 365 and asparagine 376. Residues alanine 379, 385-386 (NY), serine 404, alanine 422, and arginine 439 each bind acetyl-CoA.

The protein in the N-terminal section; belongs to the N-acetylglucosamine-1-phosphate uridyltransferase family. This sequence in the C-terminal section; belongs to the transferase hexapeptide repeat family. Homotrimer. It depends on Mg(2+) as a cofactor.

It localises to the cytoplasm. It catalyses the reaction alpha-D-glucosamine 1-phosphate + acetyl-CoA = N-acetyl-alpha-D-glucosamine 1-phosphate + CoA + H(+). The enzyme catalyses N-acetyl-alpha-D-glucosamine 1-phosphate + UTP + H(+) = UDP-N-acetyl-alpha-D-glucosamine + diphosphate. The protein operates within nucleotide-sugar biosynthesis; UDP-N-acetyl-alpha-D-glucosamine biosynthesis; N-acetyl-alpha-D-glucosamine 1-phosphate from alpha-D-glucosamine 6-phosphate (route II): step 2/2. It functions in the pathway nucleotide-sugar biosynthesis; UDP-N-acetyl-alpha-D-glucosamine biosynthesis; UDP-N-acetyl-alpha-D-glucosamine from N-acetyl-alpha-D-glucosamine 1-phosphate: step 1/1. It participates in bacterial outer membrane biogenesis; LPS lipid A biosynthesis. Catalyzes the last two sequential reactions in the de novo biosynthetic pathway for UDP-N-acetylglucosamine (UDP-GlcNAc). The C-terminal domain catalyzes the transfer of acetyl group from acetyl coenzyme A to glucosamine-1-phosphate (GlcN-1-P) to produce N-acetylglucosamine-1-phosphate (GlcNAc-1-P), which is converted into UDP-GlcNAc by the transfer of uridine 5-monophosphate (from uridine 5-triphosphate), a reaction catalyzed by the N-terminal domain. In Stenotrophomonas maltophilia (strain R551-3), this protein is Bifunctional protein GlmU.